Here is a 297-residue protein sequence, read N- to C-terminus: Counting factor 45-1 (297 aa).

The signal sequence occupies residues 1-20 (MNKLISLLLVCLVAIALVNA). In terms of domain architecture, Ch-type lysozyme spans 24-235 (IDFDSDTVNS…SASTGSGSGS (212 aa)). Catalysis depends on residues Asp29, Asp119, and Glu121. Asn166 carries N-linked (GlcNAc...) asparagine glycosylation. The S-G-S motif repeats stretch occupies residues 231–296 (SGSGSSSGSS…GSSSGSGSGS (66 aa)). Positions 231–297 (SGSGSSSGSS…SSSGSGSGSS (67 aa)) are disordered. Residues 234–275 (GSSSGSSSGSSSGSSSGSGSSSGSGSSSGSSSGSGSGSSSSG) show a composition bias toward low complexity. Residues 276-297 (SGSGSGSSSGSGSSSGSGSGSS) are compositionally biased toward gly residues.

Belongs to the glycosyl hydrolase 25 family. In terms of assembly, monomer. Component of the counting factor (CF) complex, which includes cf60, cf50, cf45-1 and ctnA.

The protein resides in the secreted. Functionally, cell-counting factor that limits the maximum size of the multicellular structure during aggregation. The protein is Counting factor 45-1 (cf45-1) of Dictyostelium discoideum (Social amoeba).